Reading from the N-terminus, the 889-residue chain is Disease resistance protein UNI (889 aa).

Residues 19–64 adopt a coiled-coil conformation; sequence NCLIGKSYIRTLEKNLRALQREMEDLRAIQHEVQNKVARDEARHQR. The tract at residues 131–152 is disordered; that stretch reads GNFDEVSQPPPRSEVEERPTQP. Residues 137-440 form the NB-ARC domain; sequence SQPPPRSEVE…CEGFIGEDQV (304 aa). 179 to 186 is a binding site for ATP; it reads GMGGVGKT. 9 LRR repeats span residues 510-532, 533-555, 557-580, 581-603, 604-625, 626-652, 653-676, 698-721, and 825-848; these read WGAV…ESKC, SELT…FIRY, QKLV…ISGL, VSLQ…LKEL, KKLT…GISR, LLSL…LQQL, QNLQ…LAKL, MENL…ESET, and CPKL…EIHM.

It belongs to the disease resistance NB-LRR family. As to quaternary structure, interacts with RPT2A.

Its function is as follows. Involved in disease resistance via the salicylic acid (SA) signaling pathway. Involved in shoot architecture development via the cytokinin signaling pathway. The polypeptide is Disease resistance protein UNI (Arabidopsis thaliana (Mouse-ear cress)).